A 955-amino-acid chain; its full sequence is 2-oxoglutarate dehydrogenase E1 component (955 aa).

The protein belongs to the alpha-ketoglutarate dehydrogenase family. Homodimer. Part of the 2-oxoglutarate dehydrogenase (OGDH) complex composed of E1 (2-oxoglutarate dehydrogenase), E2 (dihydrolipoamide succinyltransferase) and E3 (dihydrolipoamide dehydrogenase); the complex contains multiple copies of the three enzymatic components (E1, E2 and E3). The cofactor is thiamine diphosphate.

It catalyses the reaction N(6)-[(R)-lipoyl]-L-lysyl-[protein] + 2-oxoglutarate + H(+) = N(6)-[(R)-S(8)-succinyldihydrolipoyl]-L-lysyl-[protein] + CO2. Its function is as follows. E1 component of the 2-oxoglutarate dehydrogenase (OGDH) complex which catalyzes the decarboxylation of 2-oxoglutarate, the first step in the conversion of 2-oxoglutarate to succinyl-CoA and CO(2). The chain is 2-oxoglutarate dehydrogenase E1 component from Bacillus cereus (strain ATCC 10987 / NRS 248).